The chain runs to 591 residues: Aspartate--tRNA(Asp/Asn) ligase (591 aa).

E174 is a binding site for L-aspartate. Residues 198–201 (QLFK) are aspartate. R220 lines the L-aspartate pocket. ATP contacts are provided by residues 220–222 (RDE) and Q229. H450 provides a ligand contact to L-aspartate. E483 contacts ATP. R490 serves as a coordination point for L-aspartate. 535–538 (GLDR) lines the ATP pocket.

It belongs to the class-II aminoacyl-tRNA synthetase family. Type 1 subfamily. Homodimer.

Its subcellular location is the cytoplasm. The enzyme catalyses tRNA(Asx) + L-aspartate + ATP = L-aspartyl-tRNA(Asx) + AMP + diphosphate. In terms of biological role, aspartyl-tRNA synthetase with relaxed tRNA specificity since it is able to aspartylate not only its cognate tRNA(Asp) but also tRNA(Asn). Reaction proceeds in two steps: L-aspartate is first activated by ATP to form Asp-AMP and then transferred to the acceptor end of tRNA(Asp/Asn). The chain is Aspartate--tRNA(Asp/Asn) ligase from Pseudomonas aeruginosa (strain LESB58).